A 496-amino-acid chain; its full sequence is Probable cytosol aminopeptidase (496 aa).

2 residues coordinate Mn(2+): Lys268 and Asp273. The active site involves Lys280. Mn(2+) is bound by residues Asp291, Asp350, and Glu352. Arg354 is a catalytic residue.

It belongs to the peptidase M17 family. Mn(2+) serves as cofactor.

It is found in the cytoplasm. It carries out the reaction Release of an N-terminal amino acid, Xaa-|-Yaa-, in which Xaa is preferably Leu, but may be other amino acids including Pro although not Arg or Lys, and Yaa may be Pro. Amino acid amides and methyl esters are also readily hydrolyzed, but rates on arylamides are exceedingly low.. It catalyses the reaction Release of an N-terminal amino acid, preferentially leucine, but not glutamic or aspartic acids.. Its function is as follows. Presumably involved in the processing and regular turnover of intracellular proteins. Catalyzes the removal of unsubstituted N-terminal amino acids from various peptides. The polypeptide is Probable cytosol aminopeptidase (Thioalkalivibrio sulfidiphilus (strain HL-EbGR7)).